The sequence spans 579 residues: Tyrosine 3-monooxygenase (579 aa).

The segment covering 105 to 114 (VEFESVEQEQ) has biased composition (acidic residues). A disordered region spans residues 105 to 132 (VEFESVEQEQSESQSQEPEGNQQPTKND). Fe cation is bound by residues His-409, His-414, and Glu-454.

The protein belongs to the biopterin-dependent aromatic amino acid hydroxylase family. It depends on Fe(2+) as a cofactor.

It is found in the cytoplasm. The protein localises to the perinuclear region. The protein resides in the cell projection. Its subcellular location is the axon. The catalysed reaction is (6R)-L-erythro-5,6,7,8-tetrahydrobiopterin + L-tyrosine + O2 = (4aS,6R)-4a-hydroxy-L-erythro-5,6,7,8-tetrahydrobiopterin + L-dopa. It participates in catecholamine biosynthesis; dopamine biosynthesis; dopamine from L-tyrosine: step 1/2. Its activity is regulated as follows. Phosphorylation leads to an increase in the catalytic activity. In terms of biological role, plays an important role in the physiology of adrenergic neurons. The protein is Tyrosine 3-monooxygenase (ple) of Drosophila melanogaster (Fruit fly).